The primary structure comprises 205 residues: Urease accessory protein UreG (205 aa).

Gly10–Thr17 is a GTP binding site.

It belongs to the SIMIBI class G3E GTPase family. UreG subfamily. As to quaternary structure, homodimer. UreD, UreF and UreG form a complex that acts as a GTP-hydrolysis-dependent molecular chaperone, activating the urease apoprotein by helping to assemble the nickel containing metallocenter of UreC. The UreE protein probably delivers the nickel.

It is found in the cytoplasm. Functionally, facilitates the functional incorporation of the urease nickel metallocenter. This process requires GTP hydrolysis, probably effectuated by UreG. This Corynebacterium glutamicum (strain R) protein is Urease accessory protein UreG.